We begin with the raw amino-acid sequence, 642 residues long: Fimbrin (642 aa).

EF-hand domains are found at residues 16 to 50 and 51 to 86; these read EDLF…KDGD and ATYD…LRES. Residues D29, D31, W35, D66, S68, R70, and D75 each coordinate Ca(2+). Actin-binding regions lie at residues 125-394 and 395-642; these read IVAG…GLEP and IQEE…TLNK. 4 consecutive Calponin-homology (CH) domains span residues 139–259, 287–390, 411–521, and 534–642; these read EEER…RRGL, LPPE…NTHP, EREA…RRNI, and DMSD…TLNK.

Its function is as follows. Binds to actin, and functionally associates with actin structures involved in the development and maintenance of cell polarity. The sequence is that of Fimbrin (SAC6) from Saccharomyces cerevisiae (strain ATCC 204508 / S288c) (Baker's yeast).